The sequence spans 459 residues: DNA primase large subunit (459 aa).

Residues Cys291, Cys369, Cys386, and Cys428 each contribute to the [4Fe-4S] cluster site.

The protein belongs to the eukaryotic-type primase large subunit family. Heterodimer of a catalytic subunit spp1/pri1 and a regulatory subunit spp2/pri2, also known as the DNA primase complex. Component of the alpha DNA polymerase complex (also known as the alpha DNA polymerase-primase complex) consisting of four subunits: the catalytic subunit pol1, the accessory subunit spb70/pol12, and the primase complex subunits spp1/pri1 and spp2/pri2 respectively. Interacts with orc2; preferentially associates with the unphosphorylated orc2 in G1 pre-Start prior to orc2 being phosphorylated by cdc2, the interaction is mediated by spb70 and might enable the association of the whole alpha DNA polymerase complex to orc2/spb70 complex on chromatin. [4Fe-4S] cluster serves as cofactor.

It localises to the nucleus. The protein localises to the chromosome. In terms of biological role, regulatory subunit of the DNA primase complex and component of the DNA polymerase alpha complex (also known as the alpha DNA polymerase-primase complex - primosome/replisome) which play an essential role in the initiation of DNA synthesis. During the S phase of the cell cycle, the DNA polymerase alpha complex (composed of a catalytic subunit pol1, an accessory subunit spb70/pol12 and two primase subunits, the catalytic subunit spp1/pri1 and the regulatory subunit spp2/pri2) is recruited to DNA at the replicative forks. The primase subunit of the polymerase alpha complex initiates DNA synthesis by oligomerising short RNA primers on both leading and lagging strands. In Schizosaccharomyces pombe (strain 972 / ATCC 24843) (Fission yeast), this protein is DNA primase large subunit.